The following is an 88-amino-acid chain: Cell division topological specificity factor (88 aa).

This sequence belongs to the MinE family.

Prevents the cell division inhibition by proteins MinC and MinD at internal division sites while permitting inhibition at polar sites. This ensures cell division at the proper site by restricting the formation of a division septum at the midpoint of the long axis of the cell. In Citrobacter koseri (strain ATCC BAA-895 / CDC 4225-83 / SGSC4696), this protein is Cell division topological specificity factor.